Here is a 252-residue protein sequence, read N- to C-terminus: Protein GrpE (252 aa).

Positions 1–22 (MHNPQSRGHNLSQAMSDQTVTN) are enriched in polar residues. The tract at residues 1-70 (MHNPQSRGHN…EEDQASEATS (70 aa)) is disordered.

It belongs to the GrpE family. As to quaternary structure, homodimer.

Its subcellular location is the cytoplasm. Participates actively in the response to hyperosmotic and heat shock by preventing the aggregation of stress-denatured proteins, in association with DnaK and GrpE. It is the nucleotide exchange factor for DnaK and may function as a thermosensor. Unfolded proteins bind initially to DnaJ; upon interaction with the DnaJ-bound protein, DnaK hydrolyzes its bound ATP, resulting in the formation of a stable complex. GrpE releases ADP from DnaK; ATP binding to DnaK triggers the release of the substrate protein, thus completing the reaction cycle. Several rounds of ATP-dependent interactions between DnaJ, DnaK and GrpE are required for fully efficient folding. The sequence is that of Protein GrpE from Thermosynechococcus vestitus (strain NIES-2133 / IAM M-273 / BP-1).